Here is a 130-residue protein sequence, read N- to C-terminus: Small ribosomal subunit protein uS8 (130 aa).

It belongs to the universal ribosomal protein uS8 family. Part of the 30S ribosomal subunit.

One of the primary rRNA binding proteins, it binds directly to 16S rRNA central domain where it helps coordinate assembly of the platform of the 30S subunit. This Thermococcus onnurineus (strain NA1) protein is Small ribosomal subunit protein uS8.